Here is a 434-residue protein sequence, read N- to C-terminus: V-type ATP synthase beta chain (434 aa).

The protein belongs to the ATPase alpha/beta chains family.

Functionally, produces ATP from ADP in the presence of a proton gradient across the membrane. The V-type beta chain is a regulatory subunit. This is V-type ATP synthase beta chain from Borrelia garinii subsp. bavariensis (strain ATCC BAA-2496 / DSM 23469 / PBi) (Borreliella bavariensis).